A 392-amino-acid chain; its full sequence is Large ribosomal subunit protein uL3 (392 aa).

It belongs to the universal ribosomal protein uL3 family. As to quaternary structure, component of the large ribosomal subunit (LSU). Mature N.crassa ribosomes consist of a small (40S) and a large (60S) subunit. The 40S small subunit contains 1 molecule of ribosomal RNA (18S rRNA) and at least 32 different proteins. The large 60S subunit contains 3 rRNA molecules (26S, 5.8S and 5S rRNA) and at least 42 different proteins.

Its subcellular location is the cytoplasm. Component of the ribosome, a large ribonucleoprotein complex responsible for the synthesis of proteins in the cell. The small ribosomal subunit (SSU) binds messenger RNAs (mRNAs) and translates the encoded message by selecting cognate aminoacyl-transfer RNA (tRNA) molecules. The large subunit (LSU) contains the ribosomal catalytic site termed the peptidyl transferase center (PTC), which catalyzes the formation of peptide bonds, thereby polymerizing the amino acids delivered by tRNAs into a polypeptide chain. The nascent polypeptides leave the ribosome through a tunnel in the LSU and interact with protein factors that function in enzymatic processing, targeting, and the membrane insertion of nascent chains at the exit of the ribosomal tunnel. The protein is Large ribosomal subunit protein uL3 (rpl-3) of Neurospora crassa (strain ATCC 24698 / 74-OR23-1A / CBS 708.71 / DSM 1257 / FGSC 987).